The primary structure comprises 176 residues: Large ribosomal subunit protein uL10 (176 aa).

Belongs to the universal ribosomal protein uL10 family. Part of the ribosomal stalk of the 50S ribosomal subunit. The N-terminus interacts with L11 and the large rRNA to form the base of the stalk. The C-terminus forms an elongated spine to which L12 dimers bind in a sequential fashion forming a multimeric L10(L12)X complex.

Functionally, forms part of the ribosomal stalk, playing a central role in the interaction of the ribosome with GTP-bound translation factors. This Coprothermobacter proteolyticus (strain ATCC 35245 / DSM 5265 / OCM 4 / BT) protein is Large ribosomal subunit protein uL10.